The following is a 227-amino-acid chain: Cytochrome c oxidase subunit 2 (227 aa).

Over methionine 1–serine 14 the chain is Mitochondrial intermembrane. The chain crosses the membrane as a helical span at residues proline 15–methionine 45. The Mitochondrial matrix portion of the chain corresponds to leucine 46–glutamine 59. Residues glutamate 60–methionine 87 form a helical membrane-spanning segment. Topologically, residues aspartate 88–isoleucine 227 are mitochondrial intermembrane. 6 residues coordinate Cu cation: histidine 161, cysteine 196, glutamate 198, cysteine 200, histidine 204, and methionine 207. A Mg(2+)-binding site is contributed by glutamate 198.

This sequence belongs to the cytochrome c oxidase subunit 2 family. Component of the cytochrome c oxidase (complex IV, CIV), a multisubunit enzyme composed of 14 subunits. The complex is composed of a catalytic core of 3 subunits MT-CO1, MT-CO2 and MT-CO3, encoded in the mitochondrial DNA, and 11 supernumerary subunits COX4I, COX5A, COX5B, COX6A, COX6B, COX6C, COX7A, COX7B, COX7C, COX8 and NDUFA4, which are encoded in the nuclear genome. The complex exists as a monomer or a dimer and forms supercomplexes (SCs) in the inner mitochondrial membrane with NADH-ubiquinone oxidoreductase (complex I, CI) and ubiquinol-cytochrome c oxidoreductase (cytochrome b-c1 complex, complex III, CIII), resulting in different assemblies (supercomplex SCI(1)III(2)IV(1) and megacomplex MCI(2)III(2)IV(2)). Found in a complex with TMEM177, COA6, COX18, COX20, SCO1 and SCO2. Interacts with TMEM177 in a COX20-dependent manner. Interacts with COX20. Interacts with COX16. Cu cation is required as a cofactor.

It is found in the mitochondrion inner membrane. The catalysed reaction is 4 Fe(II)-[cytochrome c] + O2 + 8 H(+)(in) = 4 Fe(III)-[cytochrome c] + 2 H2O + 4 H(+)(out). Functionally, component of the cytochrome c oxidase, the last enzyme in the mitochondrial electron transport chain which drives oxidative phosphorylation. The respiratory chain contains 3 multisubunit complexes succinate dehydrogenase (complex II, CII), ubiquinol-cytochrome c oxidoreductase (cytochrome b-c1 complex, complex III, CIII) and cytochrome c oxidase (complex IV, CIV), that cooperate to transfer electrons derived from NADH and succinate to molecular oxygen, creating an electrochemical gradient over the inner membrane that drives transmembrane transport and the ATP synthase. Cytochrome c oxidase is the component of the respiratory chain that catalyzes the reduction of oxygen to water. Electrons originating from reduced cytochrome c in the intermembrane space (IMS) are transferred via the dinuclear copper A center (CU(A)) of subunit 2 and heme A of subunit 1 to the active site in subunit 1, a binuclear center (BNC) formed by heme A3 and copper B (CU(B)). The BNC reduces molecular oxygen to 2 water molecules using 4 electrons from cytochrome c in the IMS and 4 protons from the mitochondrial matrix. The polypeptide is Cytochrome c oxidase subunit 2 (MT-CO2) (Oryctolagus cuniculus (Rabbit)).